Here is a 317-residue protein sequence, read N- to C-terminus: Protein phosphatase 1 regulatory subunit 3C-B (317 aa).

Residues 150–258 (RNRLKKNLVC…NNDGKNYKLV (109 aa)) enclose the CBM21 domain.

Interacts with PPP1CC catalytic subunit of PP1 and associates with glycogen. Forms complexes with glycogen phosphorylase, glycogen synthase and phosphorylase kinase which is necessary for its regulation of PP1 activity.

Acts as a glycogen-targeting subunit for PP1 and regulates its activity. Activates glycogen synthase, reduces glycogen phosphorylase activity and limits glycogen breakdown. This Danio rerio (Zebrafish) protein is Protein phosphatase 1 regulatory subunit 3C-B (ppp1r3cb).